The sequence spans 204 residues: Crossover junction endodeoxyribonuclease RuvC (204 aa).

Active-site residues include aspartate 7, glutamate 68, and aspartate 141. The Mg(2+) site is built by aspartate 7, glutamate 68, and aspartate 141.

It belongs to the RuvC family. In terms of assembly, homodimer which binds Holliday junction (HJ) DNA. The HJ becomes 2-fold symmetrical on binding to RuvC with unstacked arms; it has a different conformation from HJ DNA in complex with RuvA. In the full resolvosome a probable DNA-RuvA(4)-RuvB(12)-RuvC(2) complex forms which resolves the HJ. Mg(2+) is required as a cofactor.

The protein resides in the cytoplasm. The enzyme catalyses Endonucleolytic cleavage at a junction such as a reciprocal single-stranded crossover between two homologous DNA duplexes (Holliday junction).. Functionally, the RuvA-RuvB-RuvC complex processes Holliday junction (HJ) DNA during genetic recombination and DNA repair. Endonuclease that resolves HJ intermediates. Cleaves cruciform DNA by making single-stranded nicks across the HJ at symmetrical positions within the homologous arms, yielding a 5'-phosphate and a 3'-hydroxyl group; requires a central core of homology in the junction. The consensus cleavage sequence is 5'-(A/T)TT(C/G)-3'. Cleavage occurs on the 3'-side of the TT dinucleotide at the point of strand exchange. HJ branch migration catalyzed by RuvA-RuvB allows RuvC to scan DNA until it finds its consensus sequence, where it cleaves and resolves the cruciform DNA. This is Crossover junction endodeoxyribonuclease RuvC from Clavibacter sepedonicus (Clavibacter michiganensis subsp. sepedonicus).